The chain runs to 307 residues: 1D-myo-inositol 2-acetamido-2-deoxy-alpha-D-glucopyranoside deacetylase 1 (307 aa).

The Zn(2+) site is built by His-21, Asp-24, and His-157.

Belongs to the MshB deacetylase family. Zn(2+) serves as cofactor.

The catalysed reaction is 1D-myo-inositol 2-acetamido-2-deoxy-alpha-D-glucopyranoside + H2O = 1D-myo-inositol 2-amino-2-deoxy-alpha-D-glucopyranoside + acetate. Catalyzes the deacetylation of 1D-myo-inositol 2-acetamido-2-deoxy-alpha-D-glucopyranoside (GlcNAc-Ins) in the mycothiol biosynthesis pathway. This chain is 1D-myo-inositol 2-acetamido-2-deoxy-alpha-D-glucopyranoside deacetylase 1, found in Frankia casuarinae (strain DSM 45818 / CECT 9043 / HFP020203 / CcI3).